The following is a 214-amino-acid chain: Phosphoenolpyruvate guanylyltransferase 2 (214 aa).

Phosphoenolpyruvate-binding residues include Thr135, Gly150, and Ser153.

The protein belongs to the CofC family.

It carries out the reaction phosphoenolpyruvate + GTP + H(+) = enolpyruvoyl-2-diphospho-5'-guanosine + diphosphate. Its pathway is cofactor biosynthesis; coenzyme F420 biosynthesis. Functionally, guanylyltransferase that catalyzes the activation of phosphoenolpyruvate (PEP) as enolpyruvoyl-2-diphospho-5'-guanosine, via the condensation of PEP with GTP. It is involved in the biosynthesis of coenzyme F420, a hydride carrier cofactor. The protein is Phosphoenolpyruvate guanylyltransferase 2 of Rhodococcus jostii (strain RHA1).